We begin with the raw amino-acid sequence, 345 residues long: Phosphoribosylformylglycinamidine cyclo-ligase (345 aa).

Belongs to the AIR synthase family.

The protein localises to the cytoplasm. The catalysed reaction is 2-formamido-N(1)-(5-O-phospho-beta-D-ribosyl)acetamidine + ATP = 5-amino-1-(5-phospho-beta-D-ribosyl)imidazole + ADP + phosphate + H(+). The protein operates within purine metabolism; IMP biosynthesis via de novo pathway; 5-amino-1-(5-phospho-D-ribosyl)imidazole from N(2)-formyl-N(1)-(5-phospho-D-ribosyl)glycinamide: step 2/2. The sequence is that of Phosphoribosylformylglycinamidine cyclo-ligase from Bifidobacterium longum (strain DJO10A).